A 412-amino-acid chain; its full sequence is Multifunctional CCA protein (412 aa).

ATP is bound by residues G8 and R11. Positions 8 and 11 each coordinate CTP. D21 and D23 together coordinate Mg(2+). 3 residues coordinate ATP: R91, R137, and R140. Residues R91, R137, and R140 each coordinate CTP. The HD domain occupies 228-329 (TGIHTLMTLS…VKLFDSIDAW (102 aa)).

This sequence belongs to the tRNA nucleotidyltransferase/poly(A) polymerase family. Bacterial CCA-adding enzyme type 1 subfamily. Monomer. Can also form homodimers and oligomers. Mg(2+) is required as a cofactor. It depends on Ni(2+) as a cofactor.

The enzyme catalyses a tRNA precursor + 2 CTP + ATP = a tRNA with a 3' CCA end + 3 diphosphate. It carries out the reaction a tRNA with a 3' CCA end + 2 CTP + ATP = a tRNA with a 3' CCACCA end + 3 diphosphate. In terms of biological role, catalyzes the addition and repair of the essential 3'-terminal CCA sequence in tRNAs without using a nucleic acid template. Adds these three nucleotides in the order of C, C, and A to the tRNA nucleotide-73, using CTP and ATP as substrates and producing inorganic pyrophosphate. tRNA 3'-terminal CCA addition is required both for tRNA processing and repair. Also involved in tRNA surveillance by mediating tandem CCA addition to generate a CCACCA at the 3' terminus of unstable tRNAs. While stable tRNAs receive only 3'-terminal CCA, unstable tRNAs are marked with CCACCA and rapidly degraded. In Escherichia coli O6:H1 (strain CFT073 / ATCC 700928 / UPEC), this protein is Multifunctional CCA protein.